The sequence spans 234 residues: UPF0173 metal-dependent hydrolase R01310 (234 aa).

This sequence belongs to the UPF0173 family.

In Rhizobium meliloti (strain 1021) (Ensifer meliloti), this protein is UPF0173 metal-dependent hydrolase R01310.